A 1447-amino-acid chain; its full sequence is Sister chromatid cohesion protein PDS5 homolog B (1447 aa).

An HEAT repeat occupies 383–419 (LLVNDHLLNFVRERTLDKRWRVRKEAMMGLAQIYKKY). The tract at residues 1117 to 1447 (KSFFTPGKPK…RRRSAKRERR (331 aa)) is disordered. The residue at position 1136 (Lys-1136) is an N6-acetyllysine. Positions 1137–1155 (PLSSAGKQSQTKSSRMETV) are enriched in polar residues. A phosphoserine mark is found at Ser-1140, Ser-1162, Ser-1166, Ser-1176, Ser-1182, and Ser-1191. Positions 1156–1167 (SNASSSSNPSSP) are enriched in low complexity. Positions 1172 to 1184 (GRLDSSEMDHSEN) are enriched in basic and acidic residues. Composition is skewed to basic and acidic residues over residues 1196–1214 (KKSD…LEKP) and 1225–1243 (QEEK…EQKP). The span at 1245–1254 (GSQRSRKRGH) shows a compositional bias: basic residues. Residues 1249–1261 (SRKRGHTASESDE) constitute a DNA-binding region (a.T hook 1). A Phosphothreonine modification is found at Thr-1255. Residues Ser-1257 and Ser-1259 each carry the phosphoserine modification. Positions 1265 to 1274 (PEEKRLKEDI) are enriched in basic and acidic residues. Ser-1283 carries the phosphoserine modification. Residues 1287–1299 (KGKRGRPPKPLGG) constitute a DNA-binding region (a.T hook 2). Over residues 1310 to 1319 (TSKKGSKKKS) the composition is skewed to basic residues. A phosphoserine mark is found at Ser-1319 and Ser-1334. A compositionally biased stretch (basic residues) spans 1342–1353 (KSKQHRVSRRAQ). The segment covering 1355 to 1372 (RAESPESSAIESTQSTPQ) has biased composition (polar residues). 2 positions are modified to phosphoserine: Ser-1358 and Ser-1366. At Thr-1367 the chain carries Phosphothreonine. Ser-1369 carries the post-translational modification Phosphoserine. Residues Thr-1370 and Thr-1381 each carry the phosphothreonine modification. Positions 1372-1384 (QKGRGRPSKTPSP) form a DNA-binding region, a.T hook 3. Low complexity predominate over residues 1379–1388 (SKTPSPSQPK). Residues Ser-1383 and Ser-1417 each carry the phosphoserine modification. Positions 1422–1432 (IPQEETEEEEV) are enriched in acidic residues. The span at 1437–1447 (VRRRSAKRERR) shows a compositional bias: basic residues.

This sequence belongs to the PDS5 family. As to quaternary structure, interacts with the cohesin complex. Interacts with RAD21; the interaction is direct. Interacts with WAPL (via FGF motifs) or CDCA5 (via the FGF motif); the interaction is direct, cohesin-dependent and competitive. Widely expressed.

The protein localises to the nucleus. Its function is as follows. Regulator of sister chromatid cohesion in mitosis which may stabilize cohesin complex association with chromatin. May couple sister chromatid cohesion during mitosis to DNA replication. Cohesion ensures that chromosome partitioning is accurate in both meiotic and mitotic cells and plays an important role in DNA repair. Plays a role in androgen-induced proliferative arrest in prostate cells. The chain is Sister chromatid cohesion protein PDS5 homolog B (PDS5B) from Homo sapiens (Human).